We begin with the raw amino-acid sequence, 65 residues long: Alpha-toxin Lqq4 (65 aa).

The 63-residue stretch at 3–65 (RDAYIADDKN…VPIRIPGKCR (63 aa)) folds into the LCN-type CS-alpha/beta domain. Residues 9–13 (DDKNC) form a specificity module, loop 1 region. Disulfide bonds link C13-C64, C17-C37, C23-C47, and C27-C49. 2 specificity module, loop regions span residues 40 to 44 (LGKYG) and 57 to 65 (PIRIPGKCR). Arginine amide is present on R65.

This sequence belongs to the long (4 C-C) scorpion toxin superfamily. Sodium channel inhibitor family. Alpha subfamily. In terms of processing, the recombinant toxin which is used for activity tests is not amidated. However, C-terminal amidation does not appear to play an important role in activity, since the non-amidated recombinant toxin and the native toxin (which is amidated) show similar activities on all sodium channels tested. In terms of tissue distribution, expressed by the venom gland.

The protein resides in the secreted. Alpha toxins bind voltage-independently at site-3 of sodium channels (Nav) and inhibit the inactivation of the activated channels, thereby blocking neuronal transmission. Both native and recombinant (non-amidated) toxins inhibit inactivation of Nav1.2/SCN2A (EC(50)=31.2-36.6 nM), Nav1.6/SCN8A (EC(50)=6.9-8.9 nM), and Nav1.7/SCN9A (EC(50)=182.0-260.1 nM). The chain is Alpha-toxin Lqq4 from Leiurus quinquestriatus quinquestriatus (Egyptian scorpion).